A 317-amino-acid polypeptide reads, in one-letter code: Acetyl-coenzyme A carboxylase carboxyl transferase subunit alpha (317 aa).

The CoA carboxyltransferase C-terminal domain occupies 43 to 293 (RVRESMADIY…GDVISNALGE (251 aa)).

It belongs to the AccA family. As to quaternary structure, acetyl-CoA carboxylase is a heterohexamer composed of biotin carboxyl carrier protein (AccB), biotin carboxylase (AccC) and two subunits each of ACCase subunit alpha (AccA) and ACCase subunit beta (AccD).

The protein localises to the cytoplasm. The enzyme catalyses N(6)-carboxybiotinyl-L-lysyl-[protein] + acetyl-CoA = N(6)-biotinyl-L-lysyl-[protein] + malonyl-CoA. It functions in the pathway lipid metabolism; malonyl-CoA biosynthesis; malonyl-CoA from acetyl-CoA: step 1/1. In terms of biological role, component of the acetyl coenzyme A carboxylase (ACC) complex. First, biotin carboxylase catalyzes the carboxylation of biotin on its carrier protein (BCCP) and then the CO(2) group is transferred by the carboxyltransferase to acetyl-CoA to form malonyl-CoA. In Rhizobium rhizogenes (strain K84 / ATCC BAA-868) (Agrobacterium radiobacter), this protein is Acetyl-coenzyme A carboxylase carboxyl transferase subunit alpha.